A 617-amino-acid polypeptide reads, in one-letter code: Dihydroxy-acid dehydratase (617 aa).

D81 contributes to the Mg(2+) binding site. C122 contacts [2Fe-2S] cluster. Residues D123 and K124 each contribute to the Mg(2+) site. N6-carboxylysine is present on K124. C195 contributes to the [2Fe-2S] cluster binding site. A Mg(2+)-binding site is contributed by E491. S517 functions as the Proton acceptor in the catalytic mechanism.

Belongs to the IlvD/Edd family. As to quaternary structure, homodimer. Requires [2Fe-2S] cluster as cofactor. The cofactor is Mg(2+).

The catalysed reaction is (2R)-2,3-dihydroxy-3-methylbutanoate = 3-methyl-2-oxobutanoate + H2O. The enzyme catalyses (2R,3R)-2,3-dihydroxy-3-methylpentanoate = (S)-3-methyl-2-oxopentanoate + H2O. The protein operates within amino-acid biosynthesis; L-isoleucine biosynthesis; L-isoleucine from 2-oxobutanoate: step 3/4. It functions in the pathway amino-acid biosynthesis; L-valine biosynthesis; L-valine from pyruvate: step 3/4. Functions in the biosynthesis of branched-chain amino acids. Catalyzes the dehydration of (2R,3R)-2,3-dihydroxy-3-methylpentanoate (2,3-dihydroxy-3-methylvalerate) into 2-oxo-3-methylpentanoate (2-oxo-3-methylvalerate) and of (2R)-2,3-dihydroxy-3-methylbutanoate (2,3-dihydroxyisovalerate) into 2-oxo-3-methylbutanoate (2-oxoisovalerate), the penultimate precursor to L-isoleucine and L-valine, respectively. The chain is Dihydroxy-acid dehydratase from Hydrogenovibrio crunogenus (strain DSM 25203 / XCL-2) (Thiomicrospira crunogena).